The sequence spans 199 residues: Riboflavin synthase (199 aa).

2 Lumazine-binding repeats span residues 1-95 and 96-188; these read MFSG…IGGH and FVSG…VDTI. 2,4-dihydroxypteridine is bound by residues 4–6, 46–48, 60–65, 99–101, Lys-130, 139–141, and 153–158; these read GII, CLT, DVTEET, GHV, SLT, and SLIPET.

As to quaternary structure, homotrimer.

The catalysed reaction is 2 6,7-dimethyl-8-(1-D-ribityl)lumazine + H(+) = 5-amino-6-(D-ribitylamino)uracil + riboflavin. The protein operates within cofactor biosynthesis; riboflavin biosynthesis; riboflavin from 2-hydroxy-3-oxobutyl phosphate and 5-amino-6-(D-ribitylamino)uracil: step 2/2. Its function is as follows. Catalyzes the dismutation of two molecules of 6,7-dimethyl-8-ribityllumazine, resulting in the formation of riboflavin and 5-amino-6-(D-ribitylamino)uracil. This Chlamydia trachomatis serovar D (strain ATCC VR-885 / DSM 19411 / UW-3/Cx) protein is Riboflavin synthase (ribE).